Here is a 418-residue protein sequence, read N- to C-terminus: Probable serine hydroxymethyltransferase (418 aa).

Residues L118 and 122-124 (GHL) contribute to the (6S)-5,6,7,8-tetrahydrofolate site. K226 carries the N6-(pyridoxal phosphate)lysine modification. 351–353 (SPF) is a binding site for (6S)-5,6,7,8-tetrahydrofolate.

It belongs to the SHMT family. Homodimer. It depends on pyridoxal 5'-phosphate as a cofactor.

The protein localises to the cytoplasm. It catalyses the reaction (6R)-5,10-methylene-5,6,7,8-tetrahydrofolate + glycine + H2O = (6S)-5,6,7,8-tetrahydrofolate + L-serine. Its pathway is one-carbon metabolism; tetrahydrofolate interconversion. Its function is as follows. Catalyzes the reversible interconversion of serine and glycine with tetrahydrofolate (THF) serving as the one-carbon carrier. This reaction serves as the major source of one-carbon groups required for the biosynthesis of purines, thymidylate, methionine, and other important biomolecules. This is Probable serine hydroxymethyltransferase from Mesomycoplasma hyopneumoniae (strain 7448) (Mycoplasma hyopneumoniae).